The following is a 545-amino-acid chain: G-protein coupled receptor 161 (545 aa).

Residues 1-46 (MDFVQHALLTASRGALTMSLNSSLSYRKELSNLTATEGGEGGAVSE) lie on the Extracellular side of the membrane. Residues Asn21 and Asn32 are each glycosylated (N-linked (GlcNAc...) asparagine). A helical transmembrane segment spans residues 47–67 (FIAIIIITVLVCLGNLVIVVT). At 68-80 (LYKKSYLLTLSNK) the chain is on the cytoplasmic side. The chain crosses the membrane as a helical span at residues 81 to 101 (FVFSLTLSNFLLSVLVLPFVV). Residues 102–117 (TSSIRREWIFGVVWCN) are Extracellular-facing. A disulfide bond links Cys116 and Cys194. Asn117 carries an N-linked (GlcNAc...) asparagine glycan. The chain crosses the membrane as a helical span at residues 118–139 (FSALLYLLISSASMLTLGVIAI). Residues 140–159 (DRYYAVLYPMVYPMKITGNR) are Cytoplasmic-facing. A helical transmembrane segment spans residues 160 to 180 (AVMALVYIWLHSLIGCLPPLF). The Extracellular portion of the chain corresponds to 181–205 (GWSSVEFDEFKWMCVAAWHQEPGYT). The chain crosses the membrane as a helical span at residues 206-226 (IFWQIWCALFPFLIMLVCYGF). Residues 227–285 (IFRVARVKARKVHCGTVVTVEEDSQRSGRKNSSTSTSSSGSRRNALQGVVYSANQCKAL) lie on the Cytoplasmic side of the membrane. A helical membrane pass occupies residues 286-306 (ITILVVIGAFMVTWGPYMVVI). Residues 307–322 (TSEALWGKNCVSPTLE) are Extracellular-facing. The helical transmembrane segment at 323 to 343 (TWATWLSFTSAICHPLIYGLW) threads the bilayer. The Cytoplasmic portion of the chain corresponds to 344–545 (NKTVRKELLG…EGNVLAAEQR (202 aa)).

It belongs to the G-protein coupled receptor 1 family.

Its subcellular location is the cell projection. The protein resides in the cilium membrane. It localises to the cell membrane. Its function is as follows. Key negative regulator of Shh signaling, which promotes the processing of GLI3 into GLI3R during neural tube development. Recruited by TULP3 and the IFT-A complex to primary cilia and acts as a regulator of the PKA-dependent basal repression machinery in Shh signaling by increasing cAMP levels, leading to promote the PKA-dependent processing of GLI3 into GLI3R and repress the Shh signaling. In presence of SHH, it is removed from primary cilia and is internalized into recycling endosomes, preventing its activity and allowing activation of the Shh signaling. Its ligand is unknown. In Mus musculus (Mouse), this protein is G-protein coupled receptor 161 (Gpr161).